Reading from the N-terminus, the 581-residue chain is Aspartate--tRNA ligase (581 aa).

Glutamate 170 lines the L-aspartate pocket. The segment at 194-197 (QLFK) is aspartate. Residue arginine 216 coordinates L-aspartate. Residues 216–218 (RDE) and glutamine 225 contribute to the ATP site. Histidine 440 contacts L-aspartate. Glutamate 469 lines the ATP pocket. Arginine 476 contacts L-aspartate. 521 to 524 (GFDR) provides a ligand contact to ATP.

The protein belongs to the class-II aminoacyl-tRNA synthetase family. Type 1 subfamily. In terms of assembly, homodimer.

The protein localises to the cytoplasm. It catalyses the reaction tRNA(Asp) + L-aspartate + ATP = L-aspartyl-tRNA(Asp) + AMP + diphosphate. Catalyzes the attachment of L-aspartate to tRNA(Asp) in a two-step reaction: L-aspartate is first activated by ATP to form Asp-AMP and then transferred to the acceptor end of tRNA(Asp). The polypeptide is Aspartate--tRNA ligase (Thermosipho africanus (strain TCF52B)).